Reading from the N-terminus, the 313-residue chain is Ribosomal RNA small subunit methyltransferase H (313 aa).

S-adenosyl-L-methionine-binding positions include 35–37 (GGH), Asp55, Phe79, Asp101, and Gln108.

This sequence belongs to the methyltransferase superfamily. RsmH family.

The protein resides in the cytoplasm. The enzyme catalyses cytidine(1402) in 16S rRNA + S-adenosyl-L-methionine = N(4)-methylcytidine(1402) in 16S rRNA + S-adenosyl-L-homocysteine + H(+). Specifically methylates the N4 position of cytidine in position 1402 (C1402) of 16S rRNA. The sequence is that of Ribosomal RNA small subunit methyltransferase H from Edwardsiella ictaluri (strain 93-146).